A 242-amino-acid polypeptide reads, in one-letter code: Pyridoxine 5'-phosphate synthase (242 aa).

N6 provides a ligand contact to 3-amino-2-oxopropyl phosphate. 8–9 (DH) serves as a coordination point for 1-deoxy-D-xylulose 5-phosphate. Position 17 (R17) interacts with 3-amino-2-oxopropyl phosphate. The active-site Proton acceptor is H42. 1-deoxy-D-xylulose 5-phosphate contacts are provided by R44 and H49. E69 acts as the Proton acceptor in catalysis. T99 contacts 1-deoxy-D-xylulose 5-phosphate. The active-site Proton donor is H190. 3-amino-2-oxopropyl phosphate is bound by residues G191 and 212–213 (GH).

This sequence belongs to the PNP synthase family. Homooctamer; tetramer of dimers.

The protein resides in the cytoplasm. It carries out the reaction 3-amino-2-oxopropyl phosphate + 1-deoxy-D-xylulose 5-phosphate = pyridoxine 5'-phosphate + phosphate + 2 H2O + H(+). It functions in the pathway cofactor biosynthesis; pyridoxine 5'-phosphate biosynthesis; pyridoxine 5'-phosphate from D-erythrose 4-phosphate: step 5/5. In terms of biological role, catalyzes the complicated ring closure reaction between the two acyclic compounds 1-deoxy-D-xylulose-5-phosphate (DXP) and 3-amino-2-oxopropyl phosphate (1-amino-acetone-3-phosphate or AAP) to form pyridoxine 5'-phosphate (PNP) and inorganic phosphate. The chain is Pyridoxine 5'-phosphate synthase from Neisseria meningitidis serogroup C.